The following is a 339-amino-acid chain: MLELFFEYIFPLIIIALKVVAITIPLILCVAYLTYAERRVIGLMQLRRGPNVVGPFGLLQPIADAVKLLFKEPIIPTNADKILFILAPMITFILSLIGWAVIPFAKGVVLADINVGVLYILAISSLSVYGIIIAGWASNSKYAFLGAIRSSAQMISYEVSMGLVIITVLLTTGTLNLSEIIEAQRTIPWWIDLMLLPMGVVFFISVLAETNRLPFDLPEAESELVAGYNVEYSSMGFALFFLGEYANMILVSAMTTTFFLGGYLPPFNISWLDCIPGFFWFVFKVGFLLFCFLWIRATLPRYRYDQLMRLGWKVFLPLTLFWVVLVSSVLVYTDNLPSI.

The next 9 membrane-spanning stretches (helical) occupy residues 9-29 (IFPL…LILC), 50-70 (PNVV…KLLF), 82-102 (ILFI…WAVI), 115-135 (VGVL…IIAG), 161-181 (MGLV…SEII), 187-207 (IPWW…ISVL), 235-255 (MGFA…SAMT), 275-295 (IPGF…FLWI), and 311-331 (GWKV…SVLV).

It belongs to the complex I subunit 1 family. As to quaternary structure, NDH-1 is composed of 14 different subunits. Subunits NuoA, H, J, K, L, M, N constitute the membrane sector of the complex.

It localises to the cell inner membrane. It carries out the reaction a quinone + NADH + 5 H(+)(in) = a quinol + NAD(+) + 4 H(+)(out). Functionally, NDH-1 shuttles electrons from NADH, via FMN and iron-sulfur (Fe-S) centers, to quinones in the respiratory chain. The immediate electron acceptor for the enzyme in this species is believed to be ubiquinone. Couples the redox reaction to proton translocation (for every two electrons transferred, four hydrogen ions are translocated across the cytoplasmic membrane), and thus conserves the redox energy in a proton gradient. This subunit may bind ubiquinone. This chain is NADH-quinone oxidoreductase subunit H, found in Rickettsia rickettsii (strain Iowa).